We begin with the raw amino-acid sequence, 440 residues long: WAS/WASL-interacting protein family member 2 (440 aa).

A compositionally biased stretch (pro residues) spans M1 to T18. The tract at residues M1–G36 is disordered. A WH2 domain is found at G36–V53. R37 carries the post-translational modification Asymmetric dimethylarginine. Residues K49–K52 are binds actin. Disordered stretches follow at residues I56 to T387 and R419 to R440. The segment covering P116–R133 has biased composition (low complexity). Positions R161 to H172 are enriched in polar residues. Pro residues-rich tracts occupy residues A176–L193, E222–P236, A249–P262, and R356–L378.

This sequence belongs to the verprolin family. Interacts with WASL and WASP, and this interaction results in cytoplasmic relocation of these two proteins along actin filaments. Interacts with NCK2 resulting in the localization to sites of focal adhesions. No interaction was seen with WASF2 and WASF3. As to expression, expressed mainly in brain, colon, lung and stomach (at protein level). Ubiquitously expressed, with high expression in brain, kidney, lung, and placenta.

The protein localises to the cytoplasm. Its subcellular location is the cytoskeleton. Plays an active role in the formation of cell surface protrusions downstream of activated PDGFB receptors. Plays an important role in actin-microspike formation through cooperation with WASL. May cooperate with WASP and WASL to induce mobilization and reorganization of the actin filament system. The polypeptide is WAS/WASL-interacting protein family member 2 (WIPF2) (Homo sapiens (Human)).